Here is a 352-residue protein sequence, read N- to C-terminus: MIKISIDAMGGDFGPEVVIPGAAKALERHPDIRFIFFGLPAQVEPVLARYPKLKAASEFRASQVAISMDDKPSQALRAGRGKSSMWQAIEAVKTGDAQACISAGNTGALMAMSKFCLRMMSDVERPAIAGIWPTLRGESIVLDVGATIGADARQLVDYAVMGAGMARALFEVRKPTVGLLNVGTEEVKGLDEIKEAGQILRDTPLDGLAYSGFVEGNDIGKGTVDVVVTEGFTGNIALKAAEGTARQMGELLRQAMRRTLLAKIGYVFAKGAFDRLREKMDPNKVNGGVFLGLSGIVIKSHGSANAEGFCSAVEVGYDMVRNRLLEKIEADLAHFHHSHPHVSNDGGEAAKA.

Belongs to the PlsX family. Homodimer. Probably interacts with PlsY.

The protein localises to the cytoplasm. It catalyses the reaction a fatty acyl-[ACP] + phosphate = an acyl phosphate + holo-[ACP]. Its pathway is lipid metabolism; phospholipid metabolism. Its function is as follows. Catalyzes the reversible formation of acyl-phosphate (acyl-PO(4)) from acyl-[acyl-carrier-protein] (acyl-ACP). This enzyme utilizes acyl-ACP as fatty acyl donor, but not acyl-CoA. This Brucella anthropi (strain ATCC 49188 / DSM 6882 / CCUG 24695 / JCM 21032 / LMG 3331 / NBRC 15819 / NCTC 12168 / Alc 37) (Ochrobactrum anthropi) protein is Phosphate acyltransferase.